Reading from the N-terminus, the 372-residue chain is Chemerin-like receptor 1 (372 aa).

Residues 1–39 are Extracellular-facing; that stretch reads MEYEGYNDSSIYGEEYSDGSDYIVDLEEAGPLEAKVAEV. N-linked (GlcNAc...) asparagine glycosylation occurs at asparagine 7. A helical membrane pass occupies residues 40 to 62; it reads FLVVIYSLVCFLGILGNGLVIVI. The Cytoplasmic portion of the chain corresponds to 63–73; sequence ATFKMKKTVNT. Residues 74 to 95 traverse the membrane as a helical segment; that stretch reads VWFVNLAVADFLFNIFLPIHIT. At 96–112 the chain is on the extracellular side; it reads YAAMDYHWVFGKAMCKI. A disulfide bridge connects residues cysteine 110 and cysteine 188. The chain crosses the membrane as a helical span at residues 113–133; it reads SSFLLSHNMYTSVFLLTVISF. At 134–152 the chain is on the cytoplasmic side; it reads DRCISVLLPVWSQNHRSVR. Residues 153–174 traverse the membrane as a helical segment; it reads LAYMTCVVVWVLAFFLSSPSLV. Residues 175–223 lie on the Extracellular side of the membrane; it reads FRDTVSTSHGKITCFNNFSLAAPEPFSHSTHPRTDPVGYSRHVAVTVTR. The N-linked (GlcNAc...) asparagine glycan is linked to asparagine 191. Residues 224 to 244 form a helical membrane-spanning segment; it reads FLCGFLIPVFIITACYLTIVF. Over 245-260 the chain is Cytoplasmic; it reads KLQRNRLAKTKKPFKI. A helical transmembrane segment spans residues 261–281; sequence IITIIITFFLCWCPYHTLYLL. Residues 282–299 are Extracellular-facing; that stretch reads ELHHTAVPASVFSLGLPL. A helical membrane pass occupies residues 300-319; sequence ATAVAIANSCMNPILYVFMG. The Cytoplasmic segment spans residues 320-372; sequence HDFKKFKVALFSRLVNALSEDTGPSSYPSHRSFTKMSSLIEKASVNEKETSTL. Serine 338 is modified (phosphoserine). Position 341 is a phosphothreonine (threonine 341). Phosphoserine occurs at positions 348, 351, and 357. At threonine 371 the chain carries Phosphothreonine.

This sequence belongs to the chemokine-like receptor (CMKLR) family. High expression in heart and lung, low in small intestines, colon, kidney, liver, uterus and brain.

It is found in the cell membrane. Receptor for the chemoattractant adipokine chemerin/RARRES2 and for the omega-3 fatty acid derived molecule resolvin E1. Interaction with RARRES2 initiates activation of G proteins G(i)/G(o) and beta-arrestin pathways inducing cellular responses via second messenger pathways such as intracellular calcium mobilization, phosphorylation of MAP kinases MAPK1/MAPK3 (ERK1/2), TYRO3, MAPK14/P38MAPK and PI3K leading to multifunctional effects, like, reduction of immune responses, enhancing of adipogenesis and angionesis. Resolvin E1 down-regulates cytokine production in macrophages by reducing the activation of MAPK1/3 (ERK1/2) and NF-kappa-B. Positively regulates adipogenesis and adipocyte metabolism. The polypeptide is Chemerin-like receptor 1 (Cmklr1) (Rattus norvegicus (Rat)).